A 434-amino-acid chain; its full sequence is Adenylosuccinate synthetase (434 aa).

GTP-binding positions include 25 to 31 (GDEGKGK) and 53 to 55 (GHT). Asp26 acts as the Proton acceptor in catalysis. 2 residues coordinate Mg(2+): Asp26 and Gly53. IMP is bound by residues 26–29 (DEGK), 51–54 (NAGH), Thr142, Arg156, Asn233, Thr248, and Arg312. The Proton donor role is filled by His54. Position 308–314 (308–314 (VTTGRKR)) interacts with substrate. GTP is bound by residues Arg314, 340-342 (KLD), and 422-424 (GVG).

Belongs to the adenylosuccinate synthetase family. As to quaternary structure, homodimer. Requires Mg(2+) as cofactor.

The protein localises to the cytoplasm. The catalysed reaction is IMP + L-aspartate + GTP = N(6)-(1,2-dicarboxyethyl)-AMP + GDP + phosphate + 2 H(+). It functions in the pathway purine metabolism; AMP biosynthesis via de novo pathway; AMP from IMP: step 1/2. In terms of biological role, plays an important role in the de novo pathway and in the salvage pathway of purine nucleotide biosynthesis. Catalyzes the first committed step in the biosynthesis of AMP from IMP. This is Adenylosuccinate synthetase from Schizosaccharomyces japonicus (strain yFS275 / FY16936) (Fission yeast).